Reading from the N-terminus, the 442-residue chain is MREIVHLQTGQCGNQIGASFWSTISGEHGLDSTGVYQGTSDLQLERMNVYFNEASGGKYVPRSILIDLEPGTMDAVRSGPFGNLFRPDNFVFGQSGAGNNWAKGHYTEGAELVDSVLDVVRREAEACDCLQGFQITHSLGGGTGAGMGTLLISKIREEYPDRMMATFSVVPSPKVSDTVVEPYNATLSVHQLVENSDETFCIDNEALYDICMRTLKLPDPGYGDLNHLVSAVMSGITTCLRFPGQLNSDLRKLAVNMVPFPRLHFFIVGFAPLTSKGSHSFRSLTVPELTQQMFDAKNMMAASDPRHGRYLTVAAIFRGRVSMKEVEDQMHSVQQKNSSYFVEWIPNNVQTALCSIPPRGLKMSSTFIGNSTSIQELFKRVGDQFSAMFRRKAFLHWYTGEGMDEMEFTEAESNMNDLVSEYQQYEIAGVDEEVELDDEIET.

8 residues coordinate GTP: Gln11, Glu69, Ser138, Gly142, Thr143, Gly144, Asn204, and Asn226. Glu69 is a Mg(2+) binding site.

It belongs to the tubulin family. Dimer of alpha and beta chains. A typical microtubule is a hollow water-filled tube with an outer diameter of 25 nm and an inner diameter of 15 nM. Alpha-beta heterodimers associate head-to-tail to form protofilaments running lengthwise along the microtubule wall with the beta-tubulin subunit facing the microtubule plus end conferring a structural polarity. Microtubules usually have 13 protofilaments but different protofilament numbers can be found in some organisms and specialized cells. Mg(2+) serves as cofactor.

It localises to the cytoplasm. It is found in the cytoskeleton. Tubulin is the major constituent of microtubules, a cylinder consisting of laterally associated linear protofilaments composed of alpha- and beta-tubulin heterodimers. Microtubules grow by the addition of GTP-tubulin dimers to the microtubule end, where a stabilizing cap forms. Below the cap, tubulin dimers are in GDP-bound state, owing to GTPase activity of alpha-tubulin. The protein is Tubulin beta chain (TUB-B) of Pneumocystis carinii.